The chain runs to 329 residues: MSSTSQVALLPKLSLPDGVTVWDGTALEYERRCNNVDEHAVHLMQTINILGIRSKEAQCLNTVLTSVARLRENRQARVYLLCQDGYGVGILKMGVKKLFVTHPSYSSLVEIDPLCVLDFFVDTSFQRKGFGKTLFDAMLLNEGLNPGEVAIDRPSVKFLAFLQKYYGLVEYTPQSNNFVVFHRYFDKWQPQRGKGHWGGNAVPTRSLVRPQNCLRVYPKYQSTTGPNNNFEEDATHRTPPPPPLPPPLVPQGSVTSPGVGKKTAYELQYEEYLREQAYRRRQGGDPRLQPVPNPVSSSEIVAASCGARRRMSPTRSGVQYNIISGTPEH.

In terms of domain architecture, N-acetyltransferase spans 5–185 (SQVALLPKLS…NNFVVFHRYF (181 aa)). Acetyl-CoA is bound by residues 119-132 (FFVD…GFGK) and 155-164 (SVKFLAFLQK). Disordered regions lie at residues 218–261 (PKYQ…GVGK) and 306–329 (GARR…TPEH). Polar residues predominate over residues 220–229 (YQSTTGPNNN). Positions 238 to 249 (TPPPPPLPPPLV) are enriched in pro residues. Residues 313-329 (PTRSGVQYNIISGTPEH) show a composition bias toward polar residues.

This sequence belongs to the acetyltransferase ATAT1 family.

The catalysed reaction is L-lysyl-[alpha-tubulin] + acetyl-CoA = N(6)-acetyl-L-lysyl-[alpha-tubulin] + CoA + H(+). Specifically acetylates 'Lys-40' in alpha-tubulin on the lumenal side of microtubules. Promotes microtubule destabilization and accelerates microtubule dynamics; this activity may be independent of acetylation activity. Acetylates alpha-tubulin with a slow enzymatic rate, due to a catalytic site that is not optimized for acetyl transfer. Enters the microtubule through each end and diffuses quickly throughout the lumen of microtubules. Acetylates only long/old microtubules because of its slow acetylation rate since it does not have time to act on dynamically unstable microtubules before the enzyme is released. In Trypanosoma cruzi (strain CL Brener), this protein is Alpha-tubulin N-acetyltransferase 1.